Reading from the N-terminus, the 187-residue chain is Ribosome-recycling factor (187 aa).

It belongs to the RRF family.

It localises to the cytoplasm. In terms of biological role, responsible for the release of ribosomes from messenger RNA at the termination of protein biosynthesis. May increase the efficiency of translation by recycling ribosomes from one round of translation to another. The protein is Ribosome-recycling factor of Flavobacterium johnsoniae (strain ATCC 17061 / DSM 2064 / JCM 8514 / BCRC 14874 / CCUG 350202 / NBRC 14942 / NCIMB 11054 / UW101) (Cytophaga johnsonae).